The sequence spans 2201 residues: Tenascin (2201 aa).

The N-terminal stretch at 1–22 (MGAMTQLLAGVFLAFLALATEG) is a signal peptide. Asn-38 carries N-linked (GlcNAc...) asparagine glycosylation. Phosphoserine is present on residues Ser-65 and Ser-70. Ser-72 carries the phosphoserine; by FAM20C modification. Residue Ser-72 is glycosylated (O-linked (Xyl...) (chondroitin sulfate) serine). Residues 118–145 (DVKELLSRLEELENLVSSLREQCTAGAG) adopt a coiled-coil conformation. 2 N-linked (GlcNAc...) asparagine glycosylation sites follow: Asn-166 and Asn-184. In terms of domain architecture, EGF-like 1; incomplete spans 174–186 (CVCEPGWKGPNCS). 14 EGF-like domains span residues 186–217 (SEPE…EDCS), 217–248 (SQLA…ADCS), 248–280 (SREI…DDCN), 280–311 (NKPL…EDCS), 311–342 (SELI…EDCG), 342–373 (GKPT…VDCS), 373–404 (SEKR…ADCG), 404–435 (GELK…EDCS), 435–466 (SQLR…YDCS), 466–497 (SDMS…EDCR), 497–528 (RDRQ…PDCA), 528–559 (AELS…KDCK), 559–590 (KEQR…LDCG), and 590–621 (GQHS…EDCS). 42 cysteine pairs are disulfide-bonded: Cys-190-Cys-200, Cys-194-Cys-205, Cys-207-Cys-216, Cys-221-Cys-231, Cys-225-Cys-236, Cys-238-Cys-247, Cys-252-Cys-263, Cys-256-Cys-268, Cys-270-Cys-279, Cys-284-Cys-294, Cys-288-Cys-299, Cys-301-Cys-310, Cys-315-Cys-325, Cys-319-Cys-330, Cys-332-Cys-341, Cys-346-Cys-356, Cys-350-Cys-361, Cys-363-Cys-372, Cys-377-Cys-387, Cys-381-Cys-392, Cys-394-Cys-403, Cys-408-Cys-418, Cys-412-Cys-423, Cys-425-Cys-434, Cys-439-Cys-449, Cys-443-Cys-454, Cys-456-Cys-465, Cys-470-Cys-480, Cys-474-Cys-485, Cys-487-Cys-496, Cys-501-Cys-511, Cys-505-Cys-516, Cys-518-Cys-527, Cys-532-Cys-542, Cys-536-Cys-547, Cys-549-Cys-558, Cys-563-Cys-573, Cys-567-Cys-578, Cys-580-Cys-589, Cys-594-Cys-604, Cys-598-Cys-609, and Cys-611-Cys-620. A glycan (N-linked (GlcNAc...) asparagine) is linked at Asn-327. Fibronectin type-III domains are found at residues 625 to 715 (PPKD…LPAP), 716 to 804 (EGLK…TRLD), 805 to 894 (APSQ…TGLD), 895 to 990 (APRN…TPKD), 991 to 1075 (LQVS…EQAP), 1076 to 1165 (ELEN…TGET), 1167 to 1256 (NLGE…TEEV), 1258 to 1350 (DMGN…LPQL), 1351 to 1439 (GDLA…AKEP), 1440 to 1531 (EIGN…ALPL), 1533 to 1621 (ENLT…EAEP), 1622 to 1711 (EVDN…TAMG), 1712 to 1801 (SPKE…ALDG), 1802 to 1888 (PSGL…TDLD), and 1889 to 1977 (SPRD…IGLL). Residue Asn-788 is glycosylated (N-linked (GlcNAc...) asparagine). Thr-905 is modified (phosphothreonine). Asn-1018, Asn-1034, Asn-1079, Asn-1093, Asn-1119, Asn-1184, Asn-1210, Asn-1261, Asn-1275, Asn-1301, Asn-1366, Asn-1392, Asn-1445, Asn-1455, Asn-1485, and Asn-1534 each carry an N-linked (GlcNAc...) asparagine glycan. Residue Asn-1809 is glycosylated (N-linked (GlcNAc...) asparagine). Positions 1975 to 2190 (GLLYPFPKDC…FAEMKLRPSN (216 aa)) constitute a Fibrinogen C-terminal domain. N-linked (GlcNAc...) asparagine glycosylation is present at Asn-2162.

It belongs to the tenascin family. As to quaternary structure, homohexamer; disulfide-linked. A homotrimer may be formed in the triple coiled-coil region and may be stabilized by disulfide rings at both ends. Two of such half-hexabrachions may be disulfide linked within the central globule. Interacts with CSPG4. Interacts (via the 3rd fibronectin type-III domain) with integrin ITGA9:ITGB1. In terms of tissue distribution, detected in fibroblasts (at protein level).

Its subcellular location is the secreted. The protein resides in the extracellular space. It localises to the extracellular matrix. In terms of biological role, extracellular matrix protein implicated in guidance of migrating neurons as well as axons during development, synaptic plasticity as well as neuronal regeneration. Promotes neurite outgrowth from cortical neurons grown on a monolayer of astrocytes. Ligand for integrins alpha-8/beta-1, alpha-9/beta-1, alpha-V/beta-3 and alpha-V/beta-6. In tumors, stimulates angiogenesis by elongation, migration and sprouting of endothelial cells. The polypeptide is Tenascin (TNC) (Homo sapiens (Human)).